We begin with the raw amino-acid sequence, 306 residues long: Pantothenate kinase (306 aa).

90 to 97 is an ATP binding site; it reads GSVAVGKS.

It belongs to the prokaryotic pantothenate kinase family.

It localises to the cytoplasm. The enzyme catalyses (R)-pantothenate + ATP = (R)-4'-phosphopantothenate + ADP + H(+). It functions in the pathway cofactor biosynthesis; coenzyme A biosynthesis; CoA from (R)-pantothenate: step 1/5. In Lactococcus lactis subsp. lactis (strain IL1403) (Streptococcus lactis), this protein is Pantothenate kinase (coaA).